The chain runs to 393 residues: Upstream-binding factor 1-like protein 1 (393 aa).

2 consecutive DNA-binding regions (HMG box) follow at residues 100–168 (PKRP…ARFR) and 222–288 (QKPP…DLWL). Positions 308-393 (KNMAMTGGPD…SSGEEIEVDV (86 aa)) are disordered. The segment covering 365–377 (EENRKKDREKEES) has biased composition (basic and acidic residues).

The protein localises to the cytoplasm. Its subcellular location is the nucleus. Its function is as follows. Essential for proliferation of the inner cell mass and trophectodermal cells in peri-implantation development. The chain is Upstream-binding factor 1-like protein 1 from Homo sapiens (Human).